Reading from the N-terminus, the 470-residue chain is Neuraminidase (470 aa).

Residues 1 to 6 (MNPNQK) lie on the Intravirion side of the membrane. A helical membrane pass occupies residues 7-27 (IITIGSICMAIGIISLILQMG). An involved in apical transport and lipid raft association region spans residues 11–33 (GSICMAIGIISLILQMGNIISIW). Residues 28 to 470 (NIISIWVSHS…GAELPFTIDK (443 aa)) lie on the Virion surface side of the membrane. Residues 36–90 (HSIQTGSQNHTGICNQRIITYENSTWVNQTYVNINNTNVVAGKDTTSVTLAGNSS) are hypervariable stalk region. N-linked (GlcNAc...) asparagine; by host glycans are attached at residues Asn44, Asn58, Asn63, Asn70, and Asn88. The head of neuraminidase stretch occupies residues 91-470 (LCPIRGWAIY…GAELPFTIDK (380 aa)). 8 cysteine pairs are disulfide-bonded: Cys92–Cys417, Cys124–Cys129, Cys184–Cys231, Cys233–Cys238, Cys279–Cys292, Cys281–Cys290, Cys318–Cys335, and Cys421–Cys447. Arg118 contributes to the substrate binding site. Asn146 carries an N-linked (GlcNAc...) asparagine; by host glycan. The active-site Proton donor/acceptor is the Asp151. A substrate-binding site is contributed by Arg152. N-linked (GlcNAc...) asparagine; by host glycosylation occurs at Asn235. 277–278 (EE) contributes to the substrate binding site. Arg293 contacts substrate. Ca(2+)-binding residues include Asp294, Gly298, and Asp324. Asn365 carries an N-linked (GlcNAc...) asparagine; by host glycan. A substrate-binding site is contributed by Arg368. The active-site Nucleophile is the Tyr402. Asn455 is a glycosylation site (N-linked (GlcNAc...) asparagine; by host).

Belongs to the glycosyl hydrolase 34 family. As to quaternary structure, homotetramer. It depends on Ca(2+) as a cofactor. N-glycosylated.

Its subcellular location is the virion membrane. The protein resides in the host apical cell membrane. The enzyme catalyses Hydrolysis of alpha-(2-&gt;3)-, alpha-(2-&gt;6)-, alpha-(2-&gt;8)- glycosidic linkages of terminal sialic acid residues in oligosaccharides, glycoproteins, glycolipids, colominic acid and synthetic substrates.. With respect to regulation, inhibited by the neuraminidase inhibitors zanamivir (Relenza) and oseltamivir (Tamiflu). These drugs interfere with the release of progeny virus from infected cells and are effective against all influenza strains. Resistance to neuraminidase inhibitors is quite rare. Catalyzes the removal of terminal sialic acid residues from viral and cellular glycoconjugates. Cleaves off the terminal sialic acids on the glycosylated HA during virus budding to facilitate virus release. Additionally helps virus spread through the circulation by further removing sialic acids from the cell surface. These cleavages prevent self-aggregation and ensure the efficient spread of the progeny virus from cell to cell. Otherwise, infection would be limited to one round of replication. Described as a receptor-destroying enzyme because it cleaves a terminal sialic acid from the cellular receptors. May facilitate viral invasion of the upper airways by cleaving the sialic acid moieties on the mucin of the airway epithelial cells. Likely to plays a role in the budding process through its association with lipid rafts during intracellular transport. May additionally display a raft-association independent effect on budding. Plays a role in the determination of host range restriction on replication and virulence. Sialidase activity in late endosome/lysosome traffic seems to enhance virus replication. This chain is Neuraminidase, found in Aves (Human).